The sequence spans 347 residues: Ferredoxin--NADP reductase 1 (347 aa).

FAD contacts are provided by T26, D45, Q53, Y58, V98, F133, D298, and S339.

Belongs to the ferredoxin--NADP reductase type 2 family. In terms of assembly, homodimer. The cofactor is FAD.

The catalysed reaction is 2 reduced [2Fe-2S]-[ferredoxin] + NADP(+) + H(+) = 2 oxidized [2Fe-2S]-[ferredoxin] + NADPH. This is Ferredoxin--NADP reductase 1 from Chloroherpeton thalassium (strain ATCC 35110 / GB-78).